A 379-amino-acid chain; its full sequence is Succinyl-diaminopimelate desuccinylase (379 aa).

Residue H70 coordinates Zn(2+). D72 is an active-site residue. D103 serves as a coordination point for Zn(2+). E137 serves as the catalytic Proton acceptor. The Zn(2+) site is built by E138, E166, and H352.

The protein belongs to the peptidase M20A family. DapE subfamily. Homodimer. Requires Zn(2+) as cofactor. The cofactor is Co(2+).

The catalysed reaction is N-succinyl-(2S,6S)-2,6-diaminopimelate + H2O = (2S,6S)-2,6-diaminopimelate + succinate. Its pathway is amino-acid biosynthesis; L-lysine biosynthesis via DAP pathway; LL-2,6-diaminopimelate from (S)-tetrahydrodipicolinate (succinylase route): step 3/3. Its function is as follows. Catalyzes the hydrolysis of N-succinyl-L,L-diaminopimelic acid (SDAP), forming succinate and LL-2,6-diaminopimelate (DAP), an intermediate involved in the bacterial biosynthesis of lysine and meso-diaminopimelic acid, an essential component of bacterial cell walls. This chain is Succinyl-diaminopimelate desuccinylase, found in Burkholderia pseudomallei (strain 1106a).